The following is a 546-amino-acid chain: Sodium/hydrogen exchanger 2 (546 aa).

Over 1–21 the chain is Cytoplasmic; that stretch reads MTMFASLTSKMLSVSTSDHAS. The chain crosses the membrane as a helical span at residues 22-42; it reads VVSLNLFVALLCACIVIGHLL. The Vacuolar portion of the chain corresponds to 43-47; that stretch reads EENRW. A helical membrane pass occupies residues 48–68; that stretch reads MNESITALLIGLGTGVVILLI. At 69–75 the chain is on the cytoplasmic side; sequence SRGKNSH. Residues 76 to 96 constitute an intramembrane region (helical); it reads LLVFSEDLFFIYLLPPIIFNA. At 97–111 the chain is on the cytoplasmic side; that stretch reads GFQVKKKQFFRNFVT. The chain crosses the membrane as a helical span at residues 112–132; that stretch reads IMAFGAIGTVVSCTIISLGAI. Residues 133–148 lie on the Vacuolar side of the membrane; that stretch reads QFFKKLDIGTFDLGDF. Intramembrane regions (helical) lie at residues 149–168 and 174–194; these read LAIGAIFAATDSVCTLQVLN and LLYSLVFGEGVVNDATSVVLF. The Vacuolar segment spans residues 195-218; that stretch reads NAIQSFDLTHLNHEAAFQFLGNFF. A helical transmembrane segment spans residues 219-239; sequence YLFLLSTGLGVATGLISAYVI. The Cytoplasmic segment spans residues 240-264; the sequence is KKLYFGRHSTDREVALMMLMAYLSY. A helical transmembrane segment spans residues 265-285; it reads MLAELFALSGILTVFFCGIVM. The Vacuolar portion of the chain corresponds to 286 to 304; the sequence is SHYTWHNVTESSRITTKHA. Asn292 carries N-linked (GlcNAc...) asparagine glycosylation. A helical membrane pass occupies residues 305–325; sequence FATLSFLAETFIFLYVGMDAL. Over 326–344 the chain is Cytoplasmic; sequence DIEKWRFVSDSPGTSVAVS. A helical transmembrane segment spans residues 345–365; it reads SILMGLVMLGRAAFVFPLSFL. Residues 366–381 are Vacuolar-facing; it reads SNLAKKHQSEKISIKQ. The chain crosses the membrane as a helical span at residues 382–402; that stretch reads QVVIWWAGLMRGAVSMALAYN. Residues 403–415 are Cytoplasmic-facing; sequence KFTRSGHTELRGN. A helical membrane pass occupies residues 416–436; it reads AIMITSTITVCLFSTMVFGML. Over 437–546 the chain is Vacuolar; it reads TKPLIRYLMP…ERSSHDLSKP (110 aa).

This sequence belongs to the monovalent cation:proton antiporter 1 (CPA1) transporter (TC 2.A.36) family. As to expression, expressed in roots and shoots.

The protein resides in the vacuole membrane. The catalysed reaction is Na(+)(in) + H(+)(out) = Na(+)(out) + H(+)(in). The enzyme catalyses K(+)(in) + H(+)(out) = K(+)(out) + H(+)(in). Acts in low affinity electroneutral exchange of protons for cations such as Na(+) or K(+) across membranes. May also exchange Li(+) and Cs(+) with a lower affinity. Involved in vacuolar ion compartmentalization necessary for cell volume regulation and cytoplasmic Na(+) detoxification. This chain is Sodium/hydrogen exchanger 2 (NHX2), found in Arabidopsis thaliana (Mouse-ear cress).